Here is a 373-residue protein sequence, read N- to C-terminus: Alcohol dehydrogenase 2 (373 aa).

Residues Cys47, Thr49, His69, Cys99, Cys102, Cys105, Cys113, and Cys177 each contribute to the Zn(2+) site. An alcohol is bound by residues Thr49 and His69. Position 49 (Thr49) interacts with NAD(+). Residues 202 to 207 (GLGAVG), Asp226, Lys231, Thr272, Phe316, and Arg366 contribute to the NAD(+) site.

This sequence belongs to the zinc-containing alcohol dehydrogenase family. In terms of assembly, homodimer. The cofactor is Zn(2+).

It is found in the cytoplasm. It catalyses the reaction a primary alcohol + NAD(+) = an aldehyde + NADH + H(+). The enzyme catalyses a secondary alcohol + NAD(+) = a ketone + NADH + H(+). The protein is Alcohol dehydrogenase 2 (ADH2) of Hordeum vulgare (Barley).